A 166-amino-acid chain; its full sequence is MSYTPQQHRVNKKLGECLAIANQHFSREFPCPTVTYKLRGKAAGKAYLQLNEIKLNQVLFSENEDAFINEVVPHELAHLITHQVFGRVRPHGNEWKYVMEKVFNVPARTTHSLEITSVQGKTFEYRCDCTTYPLSIRRHNKVIRNQSTYRCQQCQQTLAFTGLQLS.

Residues 21-160 (ANQHFSREFP…CQQCQQTLAF (140 aa)) enclose the SprT-like domain. His-74 is a binding site for Zn(2+). Residue Glu-75 is part of the active site. His-78 lines the Zn(2+) pocket.

This sequence belongs to the SprT family. It depends on Zn(2+) as a cofactor.

The protein resides in the cytoplasm. This is Protein SprT from Vibrio atlanticus (strain LGP32) (Vibrio splendidus (strain Mel32)).